The sequence spans 294 residues: uncharacterized protein (294 aa).

This sequence belongs to the glycosyltransferase 2 family.

This is an uncharacterized protein from Haemophilus influenzae (strain ATCC 51907 / DSM 11121 / KW20 / Rd).